Consider the following 411-residue polypeptide: Argininosuccinate lyase (411 aa).

The protein belongs to the lyase 1 family. Argininosuccinate lyase subfamily.

The protein localises to the cytoplasm. The catalysed reaction is 2-(N(omega)-L-arginino)succinate = fumarate + L-arginine. It participates in amino-acid biosynthesis; L-arginine biosynthesis; L-arginine from L-ornithine and carbamoyl phosphate: step 3/3. The chain is Argininosuccinate lyase from Legionella pneumophila (strain Paris).